Consider the following 278-residue polypeptide: NAD kinase (278 aa).

Asp-67 serves as the catalytic Proton acceptor. Residues 67 to 68 (DG), Arg-72, 137 to 138 (NE), Lys-148, Arg-165, Asp-167, 178 to 183 (TGYAMS), Ala-202, and Gln-237 each bind NAD(+).

It belongs to the NAD kinase family. The cofactor is a divalent metal cation.

The protein localises to the cytoplasm. It carries out the reaction NAD(+) + ATP = ADP + NADP(+) + H(+). Its function is as follows. Involved in the regulation of the intracellular balance of NAD and NADP, and is a key enzyme in the biosynthesis of NADP. Catalyzes specifically the phosphorylation on 2'-hydroxyl of the adenosine moiety of NAD to yield NADP. The sequence is that of NAD kinase from Thermococcus kodakarensis (strain ATCC BAA-918 / JCM 12380 / KOD1) (Pyrococcus kodakaraensis (strain KOD1)).